Consider the following 232-residue polypeptide: 7-cyano-7-deazaguanine synthase (232 aa).

13 to 23 (LSGGLDSATVL) contributes to the ATP binding site. Zn(2+)-binding residues include cysteine 194, cysteine 204, cysteine 207, and cysteine 210.

Belongs to the QueC family. Zn(2+) is required as a cofactor.

It catalyses the reaction 7-carboxy-7-deazaguanine + NH4(+) + ATP = 7-cyano-7-deazaguanine + ADP + phosphate + H2O + H(+). The protein operates within purine metabolism; 7-cyano-7-deazaguanine biosynthesis. Catalyzes the ATP-dependent conversion of 7-carboxy-7-deazaguanine (CDG) to 7-cyano-7-deazaguanine (preQ(0)). This Hydrogenovibrio crunogenus (strain DSM 25203 / XCL-2) (Thiomicrospira crunogena) protein is 7-cyano-7-deazaguanine synthase.